Here is a 121-residue protein sequence, read N- to C-terminus: Large ribosomal subunit protein bL12 (121 aa).

Belongs to the bacterial ribosomal protein bL12 family. Homodimer. Part of the ribosomal stalk of the 50S ribosomal subunit. Forms a multimeric L10(L12)X complex, where L10 forms an elongated spine to which 2 to 4 L12 dimers bind in a sequential fashion. Binds GTP-bound translation factors.

Functionally, forms part of the ribosomal stalk which helps the ribosome interact with GTP-bound translation factors. Is thus essential for accurate translation. The polypeptide is Large ribosomal subunit protein bL12 (Malacoplasma penetrans (strain HF-2) (Mycoplasma penetrans)).